Here is a 223-residue protein sequence, read N- to C-terminus: MNILTFGPNGSGKGTQGSLVKKKYNLAHIESGAIFREHIGGGTELGMKAKGYIDKGELVPDEITIPMILETLKAKGGNGWLLDGFPRNMVQAEKLWEALQKEGMKLDYVIEILLDRQIAKDRIMGRRLCANDPNHPNNIFIDAIKPNGDKCRVCGGDLKTRSDDQDEDAINKRHDIYYDTNTGTLAAAYFYKKLAGEGKTKYIELEGAGSIDSIKETLLSQLD.

10–15 contributes to the ATP binding site; the sequence is GSGKGT. The interval 30 to 59 is NMP; the sequence is ESGAIFREHIGGGTELGMKAKGYIDKGELV. AMP-binding positions include serine 31, arginine 36, 57–59, 84–87, and glutamine 91; these read ELV and GFPR. Residues 125 to 164 are LID; the sequence is GRRLCANDPNHPNNIFIDAIKPNGDKCRVCGGDLKTRSDD. Arginine 126 contributes to the ATP binding site. The AMP site is built by arginine 161 and arginine 173. Glycine 209 is an ATP binding site.

This sequence belongs to the adenylate kinase family. Monomer.

It localises to the cytoplasm. It catalyses the reaction AMP + ATP = 2 ADP. It functions in the pathway purine metabolism; AMP biosynthesis via salvage pathway; AMP from ADP: step 1/1. Its function is as follows. Catalyzes the reversible transfer of the terminal phosphate group between ATP and AMP. Plays an important role in cellular energy homeostasis and in adenine nucleotide metabolism. The polypeptide is Adenylate kinase (Solidesulfovibrio magneticus (strain ATCC 700980 / DSM 13731 / RS-1) (Desulfovibrio magneticus)).